The following is a 767-amino-acid chain: Tetratricopeptide repeat protein 16 (767 aa).

TPR repeat units follow at residues 18–51 (VREY…DPKL), 53–85 (DFYV…DPGN), 93–126 (AFVL…QPQN), 128–155 (SFSY…REVK), 208–241 (AKQS…NPLD), 242–275 (PNFF…VTDT), 288–321 (LLTY…EQNE), 322–355 (KGLY…SPLD), and 363–396 (GVLQ…SPQK). Residues 612 to 733 (EVTPAYGQRD…DSLSFSEISS (122 aa)) form a disordered region. A compositionally biased stretch (polar residues) spans 684–718 (QRSSQKVTKTPSLTHSTTHSDIGESANDTPGQTPW).

This Mus musculus (Mouse) protein is Tetratricopeptide repeat protein 16 (Ttc16).